A 60-amino-acid polypeptide reads, in one-letter code: UPF0434 protein Aave_2563 (60 aa).

Belongs to the UPF0434 family.

This chain is UPF0434 protein Aave_2563, found in Paracidovorax citrulli (strain AAC00-1) (Acidovorax citrulli).